A 140-amino-acid chain; its full sequence is Putative nickel-responsive regulator (140 aa).

Ni(2+) is bound by residues histidine 81, histidine 92, histidine 94, and cysteine 100.

Belongs to the transcriptional regulatory CopG/NikR family. Requires Ni(2+) as cofactor.

Functionally, transcriptional regulator. This chain is Putative nickel-responsive regulator, found in Methanothrix thermoacetophila (strain DSM 6194 / JCM 14653 / NBRC 101360 / PT) (Methanosaeta thermophila).